The following is a 163-amino-acid chain: ATP synthase subunit b 1 (163 aa).

A helical transmembrane segment spans residues 5 to 25 (FDATFFAFVGLILFLALVVYL).

It belongs to the ATPase B chain family. As to quaternary structure, F-type ATPases have 2 components, F(1) - the catalytic core - and F(0) - the membrane proton channel. F(1) has five subunits: alpha(3), beta(3), gamma(1), delta(1), epsilon(1). F(0) has three main subunits: a(1), b(2) and c(10-14). The alpha and beta chains form an alternating ring which encloses part of the gamma chain. F(1) is attached to F(0) by a central stalk formed by the gamma and epsilon chains, while a peripheral stalk is formed by the delta and b chains.

It is found in the cell inner membrane. F(1)F(0) ATP synthase produces ATP from ADP in the presence of a proton or sodium gradient. F-type ATPases consist of two structural domains, F(1) containing the extramembraneous catalytic core and F(0) containing the membrane proton channel, linked together by a central stalk and a peripheral stalk. During catalysis, ATP synthesis in the catalytic domain of F(1) is coupled via a rotary mechanism of the central stalk subunits to proton translocation. Functionally, component of the F(0) channel, it forms part of the peripheral stalk, linking F(1) to F(0). This Rhizobium etli (strain ATCC 51251 / DSM 11541 / JCM 21823 / NBRC 15573 / CFN 42) protein is ATP synthase subunit b 1.